Consider the following 486-residue polypeptide: MEVTAHYIGGKPFVGDTGESFATLNPATGEVLAHIEQADERVLAHAIESAKLGFSVWSSMSAAERSRCLLKAAQLIRDHNDELAELEVRDTGKPIQEASVVDIATGADVIEYFAGLVNGLGGEQQSLGSNQFFYTRREPLGICAGIGAWNYPIQIAMWKAAPALAAGNAMIFKPSEETPLSALKLAELFTQAGVPDGVFNVVQGDYRVGQMLTAHPEIAKVSFTGESGTGKKVMADSAATLKPVTMELGGKSPLIIFDDADLDDAVSAAMVANFYTQGEVCTHGTRVYVQRAMYDAFVEQLKERTEKLIVGDPMNMETQIGSLISKSHLEKVLGAISSAKESGATLLTGGFQVTERGLEKGCFVAPTVFVDCRDEMPHVQNEIFGPVMSVLVFDDEDEVIARANNTQYGLAAGVFTQNLSKAHRVIHQLQAGICWINTWGNSPAEMPVGGYKLSGIGRENGQETLLHYTQTKSVFVELGAFDSPYA.

K(+) is bound by residues Thr-23 and Asp-90. 147 to 149 (GAW) lines the NAD(+) pocket. The active-site Charge relay system is the Lys-159. Residues 173–176 (KPSE) and 226–229 (ESGT) contribute to the NAD(+) site. Leu-241 serves as a coordination point for K(+). Catalysis depends on Glu-247, which acts as the Proton acceptor. 3 residues coordinate NAD(+): Gly-249, Cys-281, and Glu-382. Cys-281 serves as the catalytic Nucleophile. Cys-281 carries the cysteine sulfenic acid (-SOH) modification. 2 residues coordinate K(+): Lys-452 and Gly-455. Glu-459 acts as the Charge relay system in catalysis.

This sequence belongs to the aldehyde dehydrogenase family. As to quaternary structure, dimer of dimers. K(+) serves as cofactor.

The enzyme catalyses betaine aldehyde + NAD(+) + H2O = glycine betaine + NADH + 2 H(+). Its pathway is amine and polyamine biosynthesis; betaine biosynthesis via choline pathway; betaine from betaine aldehyde: step 1/1. In terms of biological role, involved in the biosynthesis of the osmoprotectant glycine betaine. Catalyzes the irreversible oxidation of betaine aldehyde to the corresponding acid. The protein is Betaine aldehyde dehydrogenase of Vibrio vulnificus (strain YJ016).